Consider the following 134-residue polypeptide: Small ribosomal subunit protein uS8c (134 aa).

The protein belongs to the universal ribosomal protein uS8 family. In terms of assembly, part of the 30S ribosomal subunit.

The protein localises to the plastid. Its subcellular location is the chloroplast. In terms of biological role, one of the primary rRNA binding proteins, it binds directly to 16S rRNA central domain where it helps coordinate assembly of the platform of the 30S subunit. The protein is Small ribosomal subunit protein uS8c (rps8) of Ipomoea purpurea (Common morning glory).